The sequence spans 116 residues: Large ribosomal subunit protein bL19 (116 aa).

Belongs to the bacterial ribosomal protein bL19 family.

Functionally, this protein is located at the 30S-50S ribosomal subunit interface and may play a role in the structure and function of the aminoacyl-tRNA binding site. The sequence is that of Large ribosomal subunit protein bL19 from Lactobacillus gasseri (strain ATCC 33323 / DSM 20243 / BCRC 14619 / CIP 102991 / JCM 1131 / KCTC 3163 / NCIMB 11718 / NCTC 13722 / AM63).